A 599-amino-acid chain; its full sequence is NADH-quinone oxidoreductase subunit C/D (599 aa).

Residues 1–189 (MTDLTTHDLA…DPFELTKQKE (189 aa)) form an NADH dehydrogenase I subunit C region. An NADH dehydrogenase I subunit D region spans residues 213-599 (DFMFLNLGPN…IDFVMSDVDR (387 aa)).

This sequence in the N-terminal section; belongs to the complex I 30 kDa subunit family. The protein in the C-terminal section; belongs to the complex I 49 kDa subunit family. In terms of assembly, NDH-1 is composed of 13 different subunits. Subunits NuoB, CD, E, F, and G constitute the peripheral sector of the complex.

Its subcellular location is the cell inner membrane. It catalyses the reaction a quinone + NADH + 5 H(+)(in) = a quinol + NAD(+) + 4 H(+)(out). In terms of biological role, NDH-1 shuttles electrons from NADH, via FMN and iron-sulfur (Fe-S) centers, to quinones in the respiratory chain. The immediate electron acceptor for the enzyme in this species is believed to be ubiquinone. Couples the redox reaction to proton translocation (for every two electrons transferred, four hydrogen ions are translocated across the cytoplasmic membrane), and thus conserves the redox energy in a proton gradient. This is NADH-quinone oxidoreductase subunit C/D from Pectobacterium atrosepticum (strain SCRI 1043 / ATCC BAA-672) (Erwinia carotovora subsp. atroseptica).